We begin with the raw amino-acid sequence, 124 residues long: UPF0292 protein AF_0905 (124 aa).

In terms of domain architecture, Toprim spans 21–98 (GWVVVVEGKK…IPDVEIKRKI (78 aa)). Positions 27, 67, and 69 each coordinate Mg(2+).

The protein belongs to the UPF0292 family. It depends on Mg(2+) as a cofactor.

In Archaeoglobus fulgidus (strain ATCC 49558 / DSM 4304 / JCM 9628 / NBRC 100126 / VC-16), this protein is UPF0292 protein AF_0905.